The following is a 132-amino-acid chain: Vesicle transport protein GOT1A (132 aa).

Over methionine 1 to lysine 9 the chain is Cytoplasmic. A helical transmembrane segment spans residues isoleucine 10–phenylalanine 30. Residue aspartate 31 is a topological domain, lumenal. A helical membrane pass occupies residues serine 32–leucine 52. The Cytoplasmic segment spans residues arginine 53–threonine 68. The helical transmembrane segment at serine 69–leucine 89 threads the bilayer. At glutamate 90 to glycine 100 the chain is on the lumenal side. The chain crosses the membrane as a helical span at residues phenylalanine 101–leucine 121. At phenylalanine 122–valine 132 the chain is on the cytoplasmic side.

Belongs to the GOT1 family.

It localises to the golgi apparatus membrane. In terms of biological role, may be involved in fusion of ER-derived transport vesicles with the Golgi complex. The sequence is that of Vesicle transport protein GOT1A from Homo sapiens (Human).